A 210-amino-acid polypeptide reads, in one-letter code: MPPYTIVYFPVRGRCEAMRILLADQGQSWKEEVVTVETWRKGSLKSTCLYGQLPKFEDGDLTLYQSNAILRHLGRSLGLYGKDQREAALVDMVNDGVEDLRCKYITLIYTKYEEGKDDYVKALPGHLKPFETLLSQNQGGKAFIVGDQISFVDYNLLDLLLIHQVLAPGCLDNFPLLSAYVARLSARPKIKAFLSSPDHVNRPINGNGKQ.

Positions 2-81 constitute a GST N-terminal domain; it reads PPYTIVYFPV…HLGRSLGLYG (80 aa). Tyrosine 4 carries the phosphotyrosine; by EGFR modification. Residues tyrosine 8, arginine 14, tryptophan 39, lysine 45, and 52 to 53 each bind glutathione; that span reads QL. Threonine 62 is subject to Phosphothreonine. 65 to 66 contributes to the glutathione binding site; it reads QS. Residues 83–204 enclose the GST C-terminal domain; the sequence is DQREAALVDM…SSPDHVNRPI (122 aa). Residues lysine 103 and lysine 116 each carry the N6-succinyllysine modification. Lysine 128 is subject to N6-acetyllysine.

The protein belongs to the GST superfamily. Pi family. As to quaternary structure, homodimer. Interacts with CDK5.

Its subcellular location is the cytoplasm. It localises to the mitochondrion. The protein resides in the nucleus. It carries out the reaction RX + glutathione = an S-substituted glutathione + a halide anion + H(+). It catalyses the reaction prostaglandin J2 + glutathione = prostaglandin J2-S-(R)-glutathione. The enzyme catalyses prostaglandin J2 + glutathione = prostaglandin J2-S-(S)-glutathione. The catalysed reaction is prostaglandin A2 + glutathione = prostaglandin A2-S-(S)-glutathione. It carries out the reaction 11(S)-hydroxy-14(S),15(S)-epoxy-(5Z,8Z,12E)-eicosatrienoate + glutathione = (11S,15S)-dihydroxy-14(R)-S-glutathionyl-(5Z,8Z,12E)-eicosatrienoate. Its function is as follows. Conjugation of reduced glutathione to a wide number of exogenous and endogenous hydrophobic electrophiles. Involved in the formation of glutathione conjugates of both prostaglandin A2 (PGA2) and prostaglandin J2 (PGJ2). Participates in the formation of novel hepoxilin regioisomers. Negatively regulates CDK5 activity via p25/p35 translocation to prevent neurodegeneration. This Cricetulus longicaudatus (Long-tailed dwarf hamster) protein is Glutathione S-transferase P (GSTP1).